A 207-amino-acid polypeptide reads, in one-letter code: ADP-ribosylation factor (207 aa).

A lipid anchor (N-myristoyl glycine) is attached at glycine 2. Residues 32-39 (GLDGAGKT), 75-79 (DIGGQ), and 133-136 (NKID) each bind GTP.

It belongs to the small GTPase superfamily. Arf family.

Its subcellular location is the golgi apparatus. Its function is as follows. GTP-binding protein involved in protein trafficking; may modulate vesicle budding and uncoating within the Golgi apparatus. This is ADP-ribosylation factor (ARF-1) from Encephalitozoon cuniculi (strain GB-M1) (Microsporidian parasite).